We begin with the raw amino-acid sequence, 413 residues long: Multidrug resistance protein MdtA (413 aa).

The signal sequence occupies residues 1–25 (MKNKRRTYFFQFAVLAVVIATAYFA). Positions 394–413 (ANTYDQMDKSKPSNSKVENT) are disordered.

The protein belongs to the membrane fusion protein (MFP) (TC 8.A.1) family. In terms of assembly, part of a tripartite efflux system composed of MdtA, MdtB and MdtC.

The protein localises to the cell inner membrane. This is Multidrug resistance protein MdtA from Xenorhabdus bovienii (strain SS-2004) (Xenorhabdus nematophila subsp. bovienii).